Reading from the N-terminus, the 184-residue chain is Adenine phosphoribosyltransferase (184 aa).

It belongs to the purine/pyrimidine phosphoribosyltransferase family. Homodimer.

The protein localises to the cytoplasm. The enzyme catalyses AMP + diphosphate = 5-phospho-alpha-D-ribose 1-diphosphate + adenine. It participates in purine metabolism; AMP biosynthesis via salvage pathway; AMP from adenine: step 1/1. Its function is as follows. Catalyzes a salvage reaction resulting in the formation of AMP, that is energically less costly than de novo synthesis. This is Adenine phosphoribosyltransferase from Mycobacterium marinum (strain ATCC BAA-535 / M).